Reading from the N-terminus, the 362-residue chain is Holliday junction branch migration complex subunit RuvB (362 aa).

Residues 1 to 27 form a disordered region; sequence MANIEKTEFHVPAPVSAAGNQKSSLGN. A large ATPase domain (RuvB-L) region spans residues 13–206; sequence APVSAAGNQK…FGFTAQMEFY (194 aa). ATP-binding positions include L45, R46, G87, K90, T91, T92, 153–155, R196, Y206, and R243; that span reads EDF. T91 is a Mg(2+) binding site. Residues 207–277 are small ATPAse domain (RuvB-S); the sequence is EVEDLTKVVV…AAQAALVVFD (71 aa). The tract at residues 280–362 is head domain (RuvB-H); it reads EMGLDRLDRA…EPPEGIIGSL (83 aa). DNA-binding residues include R335 and R340.

It belongs to the RuvB family. As to quaternary structure, homohexamer. Forms an RuvA(8)-RuvB(12)-Holliday junction (HJ) complex. HJ DNA is sandwiched between 2 RuvA tetramers; dsDNA enters through RuvA and exits via RuvB. An RuvB hexamer assembles on each DNA strand where it exits the tetramer. Each RuvB hexamer is contacted by two RuvA subunits (via domain III) on 2 adjacent RuvB subunits; this complex drives branch migration. In the full resolvosome a probable DNA-RuvA(4)-RuvB(12)-RuvC(2) complex forms which resolves the HJ.

The protein localises to the cytoplasm. It carries out the reaction ATP + H2O = ADP + phosphate + H(+). In terms of biological role, the RuvA-RuvB-RuvC complex processes Holliday junction (HJ) DNA during genetic recombination and DNA repair, while the RuvA-RuvB complex plays an important role in the rescue of blocked DNA replication forks via replication fork reversal (RFR). RuvA specifically binds to HJ cruciform DNA, conferring on it an open structure. The RuvB hexamer acts as an ATP-dependent pump, pulling dsDNA into and through the RuvAB complex. RuvB forms 2 homohexamers on either side of HJ DNA bound by 1 or 2 RuvA tetramers; 4 subunits per hexamer contact DNA at a time. Coordinated motions by a converter formed by DNA-disengaged RuvB subunits stimulates ATP hydrolysis and nucleotide exchange. Immobilization of the converter enables RuvB to convert the ATP-contained energy into a lever motion, pulling 2 nucleotides of DNA out of the RuvA tetramer per ATP hydrolyzed, thus driving DNA branch migration. The RuvB motors rotate together with the DNA substrate, which together with the progressing nucleotide cycle form the mechanistic basis for DNA recombination by continuous HJ branch migration. Branch migration allows RuvC to scan DNA until it finds its consensus sequence, where it cleaves and resolves cruciform DNA. In Corynebacterium diphtheriae (strain ATCC 700971 / NCTC 13129 / Biotype gravis), this protein is Holliday junction branch migration complex subunit RuvB.